A 92-amino-acid chain; its full sequence is FMRFamide-like neuropeptides 5 (92 aa).

A propeptide spanning residues 1-41 (MSSRSTTIAFLFIATLLVFQCVSAQSSAEDADYLEKYQRIA) is cleaved from the precursor. Residues F51 and F61 each carry the phenylalanine amide modification. The propeptide occupies 64-82 (SRNTWEDGYASPSVNELYV). F91 carries the phenylalanine amide modification.

Belongs to the FARP (FMRFamide related peptide) family. Each flp gene is expressed in a distinct set of neurons. Flp-5 is expressed in the ASE sensory neurons, the 14 and M4 cholinergic pharyngeal motoneurons, and the PVT and RMG neurons. It is weakly expressed in the PB and 12 neurons. Also expressed in pharyngeal muscle.

The protein resides in the secreted. Functionally, FMRFamides and FMRFamide-like peptides are neuropeptides. GAKFIRF-amide has an excitatory effect on dissected pharyngeal myogenic muscle system. The protein is FMRFamide-like neuropeptides 5 of Caenorhabditis elegans.